Here is a 939-residue protein sequence, read N- to C-terminus: Protein translocase subunit SecA (939 aa).

ATP contacts are provided by residues glutamine 85, 103 to 107 (GEGKT), and aspartate 504. The segment at 850 to 939 (PVQDGAERPS…KGGGGRRRKK (90 aa)) is disordered. Over residues 854-864 (GAERPSLEKEG) the composition is skewed to basic and acidic residues. A compositionally biased stretch (basic residues) spans 924–939 (ERRKAQKGGGGRRRKK).

The protein belongs to the SecA family. In terms of assembly, monomer and homodimer. Part of the essential Sec protein translocation apparatus which comprises SecA, SecYEG and auxiliary proteins SecDF. Other proteins may also be involved.

It localises to the cell membrane. The protein resides in the cytoplasm. It carries out the reaction ATP + H2O + cellular proteinSide 1 = ADP + phosphate + cellular proteinSide 2.. Its function is as follows. Part of the Sec protein translocase complex. Interacts with the SecYEG preprotein conducting channel. Has a central role in coupling the hydrolysis of ATP to the transfer of proteins into and across the cell membrane, serving as an ATP-driven molecular motor driving the stepwise translocation of polypeptide chains across the membrane. This chain is Protein translocase subunit SecA, found in Streptomyces griseus subsp. griseus (strain JCM 4626 / CBS 651.72 / NBRC 13350 / KCC S-0626 / ISP 5235).